The primary structure comprises 67 residues: Probable Sec-independent protein translocase protein TatE (67 aa).

Residues 4 to 21 (ISITKLLVVAALIVLVFG) form a helical membrane-spanning segment. The disordered stretch occupies residues 43–67 (MNDDDTSVKKSAEEDVPADKISHKE).

Belongs to the TatA/E family. TatE subfamily.

The protein localises to the cell inner membrane. Part of the twin-arginine translocation (Tat) system that transports large folded proteins containing a characteristic twin-arginine motif in their signal peptide across membranes. TatE shares overlapping functions with TatA. The chain is Probable Sec-independent protein translocase protein TatE from Enterobacter lignolyticus (strain SCF1).